The following is a 206-amino-acid chain: Imidazole glycerol phosphate synthase subunit hisH (206 aa).

The 205-residue stretch at 2–206 (KVGLVDYSMG…REVMKKAASL (205 aa)) folds into the Glutamine amidotransferase type-1 domain. Cys80 acts as the Nucleophile in catalysis. Active-site residues include His184 and Glu186.

Heterodimer of hisH and hisF.

It localises to the plastid. Its subcellular location is the chloroplast. The enzyme catalyses 5-[(5-phospho-1-deoxy-D-ribulos-1-ylimino)methylamino]-1-(5-phospho-beta-D-ribosyl)imidazole-4-carboxamide + L-glutamine = D-erythro-1-(imidazol-4-yl)glycerol 3-phosphate + 5-amino-1-(5-phospho-beta-D-ribosyl)imidazole-4-carboxamide + L-glutamate + H(+). The catalysed reaction is L-glutamine + H2O = L-glutamate + NH4(+). It participates in amino-acid biosynthesis; L-histidine biosynthesis; L-histidine from 5-phospho-alpha-D-ribose 1-diphosphate: step 5/9. IGPS catalyzes the conversion of PRFAR and glutamine to IGP, AICAR and glutamate. The HisH subunit catalyzes the hydrolysis of glutamine to glutamate and ammonia as part of the synthesis of IGP and AICAR. The resulting ammonia molecule is channeled to the active site of HisF. The polypeptide is Imidazole glycerol phosphate synthase subunit hisH (Cyanidioschyzon merolae (strain NIES-3377 / 10D) (Unicellular red alga)).